The chain runs to 105 residues: TMEM14 protein homolog YJR085C (105 aa).

The next 3 helical transmembrane spans lie at 26-46 (IPSL…GYLL), 53-73 (GLEM…IRGM), and 77-97 (FTKP…YYYY).

This sequence belongs to the TMEM14 family.

Its subcellular location is the mitochondrion. The protein resides in the membrane. In Saccharomyces cerevisiae (strain ATCC 204508 / S288c) (Baker's yeast), this protein is TMEM14 protein homolog YJR085C.